The primary structure comprises 551 residues: Cytochrome P450 monooxygenase virE (551 aa).

Residues 1-25 (MPKPWVVFGLGTLVLFLWRLNKIGR) form the signal peptide. Residue Asn392 is glycosylated (N-linked (GlcNAc...) asparagine). Cys439 serves as a coordination point for heme.

Belongs to the cytochrome P450 family. Heme is required as a cofactor.

Its pathway is secondary metabolite biosynthesis. In terms of biological role, cytochrome P450 monooxygenase; part of the gene cluster that mediates the biosynthesis of virensols and trichoxide, fungal natural products that contain or are derived from a salicylaldehyde core. The pathway begins with the synthesis of the reduced chain in virensol C by the highly reducing polyketide synthase virA via condensation of one acetate and 8 malonate units. VirA has interesting programming rules since the first 2 ketides are fully reduced, the 3 following ketides undergo beta-dehydration, and the last 3 ketides are only reduced to beta-hydroxys to yield the trihydroxy portion. The production of aldehyde virensol C by virA alone is surprising, since virA does not contain a reductase (R) domain that is typically associated with reductive product release in HRPKS. The cupin-domain enzyme virC is involved in enhancing virA product turnover. The short-chain dehydrogenase virB then oxidizes the C-7 alcohol of virensol C to a ketone, yielding virensol D. Virensol D is further transformed to salicylaldehyde 5-deoxyaurocitrin by the short-chain dehydrogenase virD. VirD catalyzes the dehydrogenation of C-3 to form the beta-ketone aldehyde, which is followed by the generation of the nucleophilic C-2 that is required for the intramolecular aldol condensation between C-2 and C-7, itself followed by dehydration and aromatization which leads to salicylaldehyde 5-deoxyaurocitrin. While the dehydrogenation of virensol D is definitely catalyzed by virD, the aldol condensation and dehydration may be uncatalyzed or assisted by virD. The short chain dehydrogenase virG then converts salicylaldehyde 5-deoxyaurocitrin into virensol B which is further hydroxylated by the cytochrome P450 monooxygenase virE to yield the hydroquinone virensol A. VirI then may oxidize virensol A to form the quinone, while virH performs the epoxidation. Finally, the two remaining short-chain dehydrogenases, virK and virL, are probably responsible for reducing the ketones to the corresponding alcohols to furnish the epoxycyclohexanol structure in trichoxide. The chain is Cytochrome P450 monooxygenase virE from Hypocrea virens (strain Gv29-8 / FGSC 10586) (Gliocladium virens).